Consider the following 420-residue polypeptide: Serine hydroxymethyltransferase (420 aa).

Residues Leu-121 and 125–127 each bind (6S)-5,6,7,8-tetrahydrofolate; that span reads GHL. Lys-230 bears the N6-(pyridoxal phosphate)lysine mark. (6S)-5,6,7,8-tetrahydrofolate is bound by residues Glu-246 and 354-356; that span reads SPF.

This sequence belongs to the SHMT family. In terms of assembly, homodimer. It depends on pyridoxal 5'-phosphate as a cofactor.

It is found in the cytoplasm. It carries out the reaction (6R)-5,10-methylene-5,6,7,8-tetrahydrofolate + glycine + H2O = (6S)-5,6,7,8-tetrahydrofolate + L-serine. The protein operates within one-carbon metabolism; tetrahydrofolate interconversion. It functions in the pathway amino-acid biosynthesis; glycine biosynthesis; glycine from L-serine: step 1/1. Catalyzes the reversible interconversion of serine and glycine with tetrahydrofolate (THF) serving as the one-carbon carrier. This reaction serves as the major source of one-carbon groups required for the biosynthesis of purines, thymidylate, methionine, and other important biomolecules. Also exhibits THF-independent aldolase activity toward beta-hydroxyamino acids, producing glycine and aldehydes, via a retro-aldol mechanism. This Rickettsia peacockii (strain Rustic) protein is Serine hydroxymethyltransferase.